The sequence spans 440 residues: Golgi reassembly-stacking protein 1 (440 aa).

The N-myristoyl glycine moiety is linked to residue Gly2. 2 consecutive PDZ GRASP-type domains span residues 15-105 (EGFH…FCSF) and 111-199 (QVWH…YGYL). Residues 15 to 215 (EGFHLHGVQE…PPSYHKKPPG (201 aa)) are GRASP. Residues His18, His20, and Cys103 each contribute to the Zn(2+) site. The tract at residues 190–202 (LGCGIGYGYLHRI) is essential for interaction with GOLGA2/GM130. Disordered regions lie at residues 205–248 (QPPS…ETGS), 261–301 (PGSS…PVQR), and 327–440 (LPSS…STTE). Over residues 214–239 (PGTPPPSALPLGAPPPDALPPGPTPE) the composition is skewed to pro residues. The residue at position 216 (Thr216) is a Phosphothreonine. Low complexity predominate over residues 327-336 (LPSSTELTTT). Residues 337–351 (AVSTSGPEDICSSSS) show a composition bias toward polar residues. A phosphoserine mark is found at Ser362, Ser364, and Ser373.

This sequence belongs to the GORASP family. As to quaternary structure, homodimer. Forms higher-order oligomers under interphase but not mitotic conditions. Dimers of the protein on one membrane might be able to interact with dimers on another and so stack cisternae. Interacts with the C-terminus of GOLGA2/GM130 under both mitotic and non-mitotic conditions. The interaction is critical for the correct targeting of both proteins to the cis-Golgi. Interacts with TMED2 and TMED3. In terms of processing, phosphorylated by CDC2/B1 and PLK kinases during mitosis. Phosphorylation cycle correlates with the cisternal stacking cycle. Phosphorylation of the homodimer prevents the association of dimers into higher-order oligomers, leading to cisternal unstacking. Post-translationally, target for caspase-3 cleavage during apoptosis. The cleavage contributes to Golgi fragmentation and occurs very early in the execution phase of apoptosis. Myristoylated.

The protein localises to the golgi apparatus. Its subcellular location is the cis-Golgi network membrane. It is found in the endoplasmic reticulum-Golgi intermediate compartment membrane. Key structural protein of the Golgi apparatus. The membrane cisternae of the Golgi apparatus adhere to each other to form stacks, which are aligned side by side to form the Golgi ribbon. Acting in concert with GORASP2/GRASP55, is required for the formation and maintenance of the Golgi ribbon, and may be dispensable for the formation of stacks. However, other studies suggest that GORASP1 plays an important role in assembly and membrane stacking of the cisternae, and in the reassembly of Golgi stacks after breakdown during mitosis. Caspase-mediated cleavage of GORASP1 is required for fragmentation of the Golgi during apoptosis. Also mediates, via its interaction with GOLGA2/GM130, the docking of transport vesicles with the Golgi membranes. Mediates ER stress-induced unconventional (ER/Golgi-independent) trafficking of core-glycosylated CFTR to cell membrane. The sequence is that of Golgi reassembly-stacking protein 1 (GORASP1) from Homo sapiens (Human).